Consider the following 667-residue polypeptide: Heat shock protein DDB_G0283913 (667 aa).

The next 2 membrane-spanning stretches (helical) occupy residues 2–22 (FVGTLVIIICTTLIIIIKKIL) and 224–244 (MFICDMSFSLASIIVYVLNEL). Residues 18 to 82 (IKKILKRKKE…ELAKKLNCYI (65 aa)) are a coiled coil. Positions 432 to 478 (IDDTIQDNDKSGSEVSTPTISSSSSSPLQPIIKDEKDDNIENKSDEA) are disordered. The span at 444 to 457 (SEVSTPTISSSSSS) shows a compositional bias: low complexity. Over residues 463–477 (IKDEKDDNIENKSDE) the composition is skewed to basic and acidic residues. One can recognise a sHSP domain in the interval 551–667 (MVFSSGFKPF…VITFKFEKIG (117 aa)).

It belongs to the small heat shock protein (HSP20) family.

It localises to the membrane. The polypeptide is Heat shock protein DDB_G0283913 (Dictyostelium discoideum (Social amoeba)).